Reading from the N-terminus, the 748-residue chain is Adenosylcobalamin-dependent ribonucleoside-triphosphate reductase (748 aa).

Cys-123 and Cys-426 are oxidised to a cystine. An effector region-1 region spans residues 151–162 (SMPYSFMFDELM). The tract at residues 172 to 320 (TKDNIAKLPP…IGNLIGKTVV (149 aa)) is effector region-2. Residues Cys-415 and Glu-417 contribute to the active site. The segment at 572 to 633 (FHYAGYLIQR…DPAFASAGTV (62 aa)) is adenosylcobalamin-binding-1. The segment at 692-733 (FKQAPKEPIDVKTYKQKCAAIHGSVAAVFAVQNADHDQKDLE) is adenosylcobalamin-binding-2.

It belongs to the class II ribonucleoside-triphosphate reductase family. In terms of assembly, monomer. Requires adenosylcob(III)alamin as cofactor.

It catalyses the reaction a 2'-deoxyribonucleoside 5'-triphosphate + [thioredoxin]-disulfide + H2O = a ribonucleoside 5'-triphosphate + [thioredoxin]-dithiol. With respect to regulation, allosterically regulated by ATP and dNTP. The polypeptide is Adenosylcobalamin-dependent ribonucleoside-triphosphate reductase (rtpR) (Lacticaseibacillus paracasei (strain ATCC 334 / BCRC 17002 / CCUG 31169 / CIP 107868 / KCTC 3260 / NRRL B-441) (Lactobacillus paracasei)).